A 119-amino-acid polypeptide reads, in one-letter code: Small ribosomal subunit protein uS13 (119 aa).

Basic residues predominate over residues 92–110 (RKDTCKRSTKKNARTRKGP). A disordered region spans residues 92 to 119 (RKDTCKRSTKKNARTRKGPKKDNRWKER).

This sequence belongs to the universal ribosomal protein uS13 family. In terms of assembly, part of the 30S ribosomal subunit. Forms a loose heterodimer with protein S19. Forms two bridges to the 50S subunit in the 70S ribosome.

Its function is as follows. Located at the top of the head of the 30S subunit, it contacts several helices of the 16S rRNA. In the 70S ribosome it contacts the 23S rRNA (bridge B1a) and protein L5 of the 50S subunit (bridge B1b), connecting the 2 subunits; these bridges are implicated in subunit movement. Contacts the tRNAs in the A and P-sites. The polypeptide is Small ribosomal subunit protein uS13 (Mycoplasma sp).